The primary structure comprises 310 residues: Deoxypodophyllotoxin synthase (310 aa).

A Fe2OG dioxygenase domain is found at 159–258 (STNYLLHFMR…RLSTSSFSFP (100 aa)). Fe cation contacts are provided by His-184, Asp-186, and His-239. Arg-249 provides a ligand contact to 2-oxoglutarate.

This sequence belongs to the iron/ascorbate-dependent oxidoreductase family. Requires Fe(2+) as cofactor. In terms of tissue distribution, mostly expressed in leaves and stems.

It catalyses the reaction (-)-yatein + 2-oxoglutarate + O2 = (-)-deoxypodophyllotoxin + succinate + CO2 + H2O. It functions in the pathway aromatic compound metabolism; phenylpropanoid biosynthesis. Its function is as follows. 2-oxoglutarate-dependent dioxygenase involved in the biosynthesis of etoposide, a chemotherapeutic compound of the topoisomerase inhibitor family. Catalyzes the conversion of yatein to deoxypodophyllotoxin. Can also use, to some extent, demethylyatein as substrate. This is Deoxypodophyllotoxin synthase from Sinopodophyllum hexandrum (Himalayan may apple).